A 164-amino-acid chain; its full sequence is V-type proton ATPase 16 kDa proteolipid subunit (164 aa).

Residues 1 to 9 (MSNFAGDET) are Lumenal-facing. The chain crosses the membrane as a helical span at residues 10 to 32 (APFFGFLGAAAALVFSCMGAAYG). The Cytoplasmic segment spans residues 33–54 (TAKSGVGVASMGVMRPELVMKS). Residues 55-75 (IVPVVMAGVLGIYGLIIAVII) traverse the membrane as a helical segment. The Lumenal portion of the chain corresponds to 76–94 (STGINPKTKSYYLFDGYAH). A helical membrane pass occupies residues 95 to 116 (LSSGLACGLAGLSAGMAIGIVG). At 117-128 (DAGVRANAQQPK) the chain is on the cytoplasmic side. The helical transmembrane segment at 129-154 (LFVGMILILIFAEALALYGLIVGIIL) threads the bilayer. Residues 155–164 (SSRAGQSRAE) lie on the Lumenal side of the membrane.

This sequence belongs to the V-ATPase proteolipid subunit family. As to quaternary structure, V-ATPase is a heteromultimeric enzyme composed of a peripheral catalytic V1 complex (main components: subunits A, B, C, D, E, and F) attached to an integral membrane V0 proton pore complex (main component: the proteolipid protein; which is present as a hexamer that forms the proton-conducting pore).

The protein resides in the vacuole membrane. Functionally, proton-conducting pore forming subunit of the membrane integral V0 complex of vacuolar ATPase. V-ATPase is responsible for acidifying a variety of intracellular compartments in eukaryotic cells. In Solanum lycopersicum (Tomato), this protein is V-type proton ATPase 16 kDa proteolipid subunit.